Consider the following 396-residue polypeptide: Coiled-coil domain-containing protein 1 (396 aa).

The N-terminal stretch at 1–21 is a signal peptide; sequence MAARSALCFLAIITLFVYACG. 4 coiled-coil regions span residues 53-73, 109-129, 208-242, and 287-308; these read KIDS…NDRD, EVEK…DIID, DKES…ILDT, and YEEI…IDEH. Residues 231–256 are compositionally biased toward acidic residues; sequence DANDDVNDILDTDDEDEDEDVQEEKD. 2 disordered regions span residues 231-260 and 288-378; these read DAND…EDIH and EEIE…VADD.

In terms of tissue distribution, component of the acid-insoluble and acid-soluble organic matrix of calcified layers of the shell (at protein level).

The protein resides in the secreted. This Lottia gigantea (Giant owl limpet) protein is Coiled-coil domain-containing protein 1.